A 198-amino-acid polypeptide reads, in one-letter code: Small ribosomal subunit protein uS4 (198 aa).

Residues 91 to 154 (SRLDNVVYRL…KNLNIVQEAL (64 aa)) enclose the S4 RNA-binding domain.

It belongs to the universal ribosomal protein uS4 family. As to quaternary structure, part of the 30S ribosomal subunit. Contacts protein S5. The interaction surface between S4 and S5 is involved in control of translational fidelity.

Its function is as follows. One of the primary rRNA binding proteins, it binds directly to 16S rRNA where it nucleates assembly of the body of the 30S subunit. Functionally, with S5 and S12 plays an important role in translational accuracy. This Aster yellows witches'-broom phytoplasma (strain AYWB) protein is Small ribosomal subunit protein uS4.